We begin with the raw amino-acid sequence, 777 residues long: Glucocorticoid receptor (777 aa).

Positions 1–14 (MDSKESLTPGKEEN) are enriched in basic and acidic residues. The interval 1–22 (MDSKESLTPGKEENPSSVLTQE) is disordered. Residues 1-420 (MDSKESLTPG…TATTGPPPKL (420 aa)) are modulating. At Thr-8 the chain carries Phosphothreonine. An Omega-N-methylarginine modification is found at Arg-23. Phosphoserine is present on residues Ser-45, Ser-113, Ser-134, and Ser-141. The disordered stretch occupies residues 130 to 183 (NRSTSVPENPKSSASSSVSAAPKEKEFPKTHSDVSSEQQNLKGQTGTNGGNAKL). Residues 134-150 (SVPENPKSSASSSVSAA) show a composition bias toward low complexity. Positions 151–163 (PKEKEFPKTHSDV) are enriched in basic and acidic residues. The segment covering 164–174 (SSEQQNLKGQT) has biased composition (polar residues). Phosphoserine is present on residues Ser-203, Ser-211, and Ser-226. Lys-258 participates in a covalent cross-link: Glycyl lysine isopeptide (Lys-Gly) (interchain with G-Cter in SUMO2). A Phosphoserine modification is found at Ser-267. Glycyl lysine isopeptide (Lys-Gly) (interchain with G-Cter in SUMO); alternate cross-links involve residues Lys-277 and Lys-293. Residues Lys-277 and Lys-293 each participate in a glycyl lysine isopeptide (Lys-Gly) (interchain with G-Cter in SUMO2); alternate cross-link. Over residues 394 to 414 (SSPSMRPDVSSPPSSSSTATT) the composition is skewed to low complexity. Residues 394–415 (SSPSMRPDVSSPPSSSSTATTG) are disordered. Residue Ser-404 is modified to Phosphoserine. Lys-419 is covalently cross-linked (Glycyl lysine isopeptide (Lys-Gly) (interchain with G-Cter in ubiquitin)). NR C4-type zinc fingers lie at residues 421–441 (CLVCSDEASGCHYGVLTCGSC) and 457–481 (CAGRNDCIIDKIRRKNCPACRYRKC). The nuclear receptor DNA-binding region spans 421–486 (CLVCSDEASG…RYRKCLQAGM (66 aa)). N6-acetyllysine occurs at positions 480, 492, 494, and 495. The tract at residues 485-777 (GMNLEARKTK…NIRKLLFHQK (293 aa)) is interaction with CLOCK. The interval 487-523 (NLEARKTKKKIKGIQQATTGVSQETSENPANKTIVPA) is hinge. Residues 524 to 758 (TLPQLTPTLV…FPEMLAEIIT (235 aa)) form the NR LBD domain. The tract at residues 532–697 (LVSLLEVIEP…EIRMTYIKEL (166 aa)) is interaction with CRY1. Residue Lys-703 forms a Glycyl lysine isopeptide (Lys-Gly) (interchain with G-Cter in SUMO) linkage.

It belongs to the nuclear hormone receptor family. NR3 subfamily. In terms of assembly, heteromultimeric cytoplasmic complex with HSP90AA1, HSPA1A/HSPA1B, and FKBP5 or another immunophilin such as PPID, STIP1, or the immunophilin homolog PPP5C. Upon ligand binding FKBP5 dissociates from the complex and FKBP4 takes its place, thereby linking the complex to dynein and mediating transport to the nucleus, where the complex dissociates. Probably forms a complex composed of chaperones HSP90 and HSP70, co-chaperones CDC37, PPP5C, TSC1 and client protein TSC2, CDK4, AKT, RAF1 and NR3C1; this complex does not contain co-chaperones STIP1/HOP and PTGES3/p23. Directly interacts with UNC45A. Binds to DNA as a homodimer, and as heterodimer with NR3C2 or the retinoid X receptor. Binds STAT5A and STAT5B homodimers and heterodimers. Interacts with NRIP1, POU2F1, POU2F2 and TRIM28. Interacts with several coactivator complexes, including the SMARCA4 complex, CREBBP/EP300, TADA2L (Ada complex) and p160 coactivators such as NCOA2 and NCOA6. Interaction with BAG1 inhibits transactivation. Interacts with HEXIM1 and TGFB1I1. Interacts with NCOA1. Interacts with NCOA3, SMARCA4, SMARCC1, SMARCD1, and SMARCE1. Interacts with CLOCK, CRY1 and CRY2 in a ligand-dependent fashion. Interacts with CIART. Interacts with RWDD3. Interacts with UBE2I/UBC9 and this interaction is enhanced in the presence of RWDD3. Interacts with GRIP1. Interacts with NR4A3 (via nuclear receptor DNA-binding domain), represses transcription activity of NR4A3 on the POMC promoter Nur response element (NurRE). Directly interacts with PNRC2 to attract and form a complex with UPF1 and DCP1A; the interaction leads to rapid mRNA degradation. Interacts with GSK3B. Interacts with FNIP1 and FNIP2. Interacts (via C-terminus) with HNRNPU (via C-terminus). Interacts with MCM3AP. Interacts (via domain NR LBD) with HSP90AA1 and HSP90AB1. In the absence of hormonal ligand, interacts with TACC1. Interacts (via NR LBD domain) with ZNF764 (via KRAB domain); the interaction regulates transcription factor activity of NR3C1 by directing its actions toward certain biologic pathways. In terms of processing, acetylation by CLOCK reduces its binding to glucocorticoid response elements and its transcriptional activity. Post-translationally, increased proteasome-mediated degradation in response to glucocorticoids. Phosphorylated in the absence of hormone; becomes hyperphosphorylated in the presence of glucocorticoid. The Ser-203, Ser-226 and Ser-404-phosphorylated forms are mainly cytoplasmic, and the Ser-211-phosphorylated form is nuclear. Phosphorylation at Ser-211 increases transcriptional activity. Phosphorylation at Ser-203, Ser-226 and Ser-404 decreases signaling capacity. Phosphorylation at Ser-404 may protect from glucocorticoid-induced apoptosis. Phosphorylation at Ser-203 and Ser-211 is not required in regulation of chromosome segregation. May be dephosphorylated by PPP5C, attenuates NR3C1 action. In terms of processing, ubiquitinated by UBR5, leading to its degradation: UBR5 specifically recognizes and binds ligand-bound NR3C1 when it is not associated with coactivators (NCOAs). In presence of NCOAs, the UBR5-degron is not accessible, preventing its ubiquitination and degradation. Post-translationally, sumoylation at Lys-277 and Lys-293 negatively regulates its transcriptional activity. Sumoylation at Lys-703 positively regulates its transcriptional activity in the presence of RWDD3. Sumoylation at Lys-277 and Lys-293 is dispensable whereas sumoylation at Lys-703 is critical for the stimulatory effect of RWDD3 on its transcriptional activity. Heat shock increases sumoylation in a RWDD3-dependent manner.

It localises to the cytoplasm. It is found in the nucleus. The protein localises to the mitochondrion. The protein resides in the cytoskeleton. Its subcellular location is the spindle. It localises to the microtubule organizing center. It is found in the centrosome. The protein localises to the chromosome. The protein resides in the nucleoplasm. Receptor for glucocorticoids (GC). Has a dual mode of action: as a transcription factor that binds to glucocorticoid response elements (GRE), both for nuclear and mitochondrial DNA, and as a modulator of other transcription factors. Affects inflammatory responses, cellular proliferation and differentiation in target tissues. Involved in chromatin remodeling. Plays a role in rapid mRNA degradation by binding to the 5' UTR of target mRNAs and interacting with PNRC2 in a ligand-dependent manner which recruits the RNA helicase UPF1 and the mRNA-decapping enzyme DCP1A, leading to RNA decay. Could act as a coactivator for STAT5-dependent transcription upon growth hormone (GH) stimulation and could reveal an essential role of hepatic GR in the control of body growth. Mediates glucocorticoid-induced apoptosis. Promotes accurate chromosome segregation during mitosis. May act as a tumor suppressor. May play a negative role in adipogenesis through the regulation of lipolytic and antilipogenic gene expression. This Saguinus oedipus (Cotton-top tamarin) protein is Glucocorticoid receptor (NR3C1).